The chain runs to 92 residues: UPF0250 protein VP0718 (92 aa).

The protein belongs to the UPF0250 family.

This chain is UPF0250 protein VP0718, found in Vibrio parahaemolyticus serotype O3:K6 (strain RIMD 2210633).